A 268-amino-acid chain; its full sequence is Tryptophan synthase alpha chain (268 aa).

Active-site proton acceptor residues include Glu-49 and Asp-60.

This sequence belongs to the TrpA family. As to quaternary structure, tetramer of two alpha and two beta chains.

It catalyses the reaction (1S,2R)-1-C-(indol-3-yl)glycerol 3-phosphate + L-serine = D-glyceraldehyde 3-phosphate + L-tryptophan + H2O. The protein operates within amino-acid biosynthesis; L-tryptophan biosynthesis; L-tryptophan from chorismate: step 5/5. Functionally, the alpha subunit is responsible for the aldol cleavage of indoleglycerol phosphate to indole and glyceraldehyde 3-phosphate. The sequence is that of Tryptophan synthase alpha chain from Haemophilus influenzae (strain 86-028NP).